A 538-amino-acid polypeptide reads, in one-letter code: ATP synthase subunit alpha, mitochondrial (538 aa).

197 to 204 (GDRQTGKT) provides a ligand contact to ATP. An essential and sufficient for enterobactin binding region spans residues 228–248 (FCIYVAVGQKRSTVAQIVKRL).

The protein belongs to the ATPase alpha/beta chains family. In terms of assembly, subunit of the F-type ATPase which has 2 components, CF(1) - the catalytic core - and CF(0) - the membrane proton channel. As to expression, ubiquitous (at protein level).

Its subcellular location is the mitochondrion. The protein localises to the mitochondrion inner membrane. Functionally, mitochondrial membrane ATP synthase (F(1)F(0) ATP synthase or Complex V) produces ATP from ADP in the presence of a proton gradient across the membrane which is generated by electron transport complexes of the respiratory chain. F-type ATPases consist of two structural domains, F(1) - containing the extramembraneous catalytic core, and F(0) - containing the membrane proton channel, linked together by a central stalk and a peripheral stalk. During catalysis, ATP synthesis in the catalytic domain of F(1) is coupled via a rotary mechanism of the central stalk subunits to proton translocation. Subunits alpha and beta form the catalytic core in F(1). Rotation of the central stalk against the surrounding subunits leads to hydrolysis of ATP in three separate catalytic sites on the beta subunits. Subunit alpha does not bear the catalytic high-affinity ATP-binding sites. Binds the bacterial siderophore enterobactin and is required for the assimilation of enterobactin-bound iron from non-pathogenic bacteria. Promotes mitochondrial accumulation of enterobactin-derived iron ions. The sequence is that of ATP synthase subunit alpha, mitochondrial from Caenorhabditis elegans.